The primary structure comprises 228 residues: L-ribulose-5-phosphate 4-epimerase UlaF (228 aa).

Residues 26 to 27, 43 to 44, and 72 to 73 contribute to the substrate site; these read GN, SG, and SS. Zn(2+) contacts are provided by aspartate 74, histidine 93, and histidine 95. Aspartate 118 serves as the catalytic Proton donor/acceptor. Residue histidine 167 coordinates Zn(2+). The active-site Proton donor/acceptor is tyrosine 225.

Belongs to the aldolase class II family. AraD/FucA subfamily. It depends on Zn(2+) as a cofactor.

The catalysed reaction is L-ribulose 5-phosphate = D-xylulose 5-phosphate. Its pathway is cofactor degradation; L-ascorbate degradation; D-xylulose 5-phosphate from L-ascorbate: step 4/4. Its function is as follows. Catalyzes the isomerization of L-ribulose 5-phosphate to D-xylulose 5-phosphate. Is involved in the anaerobic L-ascorbate utilization. In Shigella flexneri, this protein is L-ribulose-5-phosphate 4-epimerase UlaF.